The following is a 226-amino-acid chain: Putative uroporphyrinogen-III synthase (226 aa).

Belongs to the uroporphyrinogen-III synthase family.

The enzyme catalyses hydroxymethylbilane = uroporphyrinogen III + H2O. It functions in the pathway porphyrin-containing compound metabolism; protoporphyrin-IX biosynthesis; coproporphyrinogen-III from 5-aminolevulinate: step 3/4. Catalyzes cyclization of the linear tetrapyrrole, hydroxymethylbilane, to the macrocyclic uroporphyrinogen III. This is Putative uroporphyrinogen-III synthase from Archaeoglobus fulgidus (strain ATCC 49558 / DSM 4304 / JCM 9628 / NBRC 100126 / VC-16).